Here is a 147-residue protein sequence, read N- to C-terminus: Phospholipase A2 inhibitor subunit B (147 aa).

Residues 62-143 enclose the C-type lectin domain; it reads EICEEAGGHI…DEKLLVVCEF (82 aa). Intrachain disulfides connect Cys-64–Cys-141 and Cys-119–Cys-133. N-linked (GlcNAc...) asparagine glycosylation occurs at Asn-103.

The protein belongs to the alpha-type phospholipase A2 inhibitor family. In terms of assembly, homo- or heterotrimer; homotrimer of PLI-A chains, two PLI-A and one PLI-B chains, one PLI-A and two PLI-B chains, and homotrimer of PLI-B chains (with a ratio of 1:3:3:1). In terms of tissue distribution, expressed by the liver.

It localises to the secreted. Its function is as follows. PLI binds directly phospholipase A2 in the presence or absence of calcium. Inhibitory activity of the PLI-B homotrimer is less specific than that of the PLI-A homotrimer. The protein is Phospholipase A2 inhibitor subunit B of Protobothrops flavoviridis (Habu).